Here is a 413-residue protein sequence, read N- to C-terminus: Divalent metal cation transporter MntH (413 aa).

11 helical membrane-spanning segments follow: residues 19–39 (FALM…GNFA), 49–69 (GYQL…IQLM), 94–114 (VWFY…AEFI), 122–142 (LVFG…TFLI), 155–175 (LVIG…LFFS), 196–216 (AVLL…IYLH), 240–260 (VAIA…TAAA), 287–307 (AAAL…TVVG), 323–343 (IPLL…ILAG), 349–369 (ILVM…IPLL), and 393–413 (LIVV…ALNL).

It belongs to the NRAMP family.

The protein localises to the cell inner membrane. Its function is as follows. H(+)-stimulated, divalent metal cation uptake system. This is Divalent metal cation transporter MntH from Erwinia tasmaniensis (strain DSM 17950 / CFBP 7177 / CIP 109463 / NCPPB 4357 / Et1/99).